The primary structure comprises 174 residues: von Hippel-Lindau tumor suppressor homolog (174 aa).

This sequence belongs to the VHL family. Interacts with hif-1 (hydroxylated on 'Pro-621'); the interaction induces hif-1 degradation. May be a component of the cullin E3 ubiquitin ligase complex.

Its pathway is protein modification; protein ubiquitination. In terms of biological role, involved in the response to variation in environmental oxygen levels by targeting the hypoxia-inducible transcription factor hif-1 for proteasomal degradation when oxygen levels are normal (around 20%). By regulating hif-1 expression, plays a role in iron homeostasis, aging, heat acclimation and progeny size. Mediates resistance to enteropathogenic E.coli. Mediates susceptibility to B.thuringiensis pore-forming toxins. Not involved in P.aeruginosa susceptibility. The sequence is that of von Hippel-Lindau tumor suppressor homolog from Caenorhabditis elegans.